Here is a 934-residue protein sequence, read N- to C-terminus: 2-oxoglutarate dehydrogenase E1 component (934 aa).

Belongs to the alpha-ketoglutarate dehydrogenase family. Homodimer. Part of the 2-oxoglutarate dehydrogenase (OGDH) complex composed of E1 (2-oxoglutarate dehydrogenase), E2 (dihydrolipoamide succinyltransferase) and E3 (dihydrolipoamide dehydrogenase); the complex contains multiple copies of the three enzymatic components (E1, E2 and E3). Thiamine diphosphate is required as a cofactor.

The catalysed reaction is N(6)-[(R)-lipoyl]-L-lysyl-[protein] + 2-oxoglutarate + H(+) = N(6)-[(R)-S(8)-succinyldihydrolipoyl]-L-lysyl-[protein] + CO2. Its function is as follows. E1 component of the 2-oxoglutarate dehydrogenase (OGDH) complex which catalyzes the decarboxylation of 2-oxoglutarate, the first step in the conversion of 2-oxoglutarate to succinyl-CoA and CO(2). This is 2-oxoglutarate dehydrogenase E1 component (sucA) from Coxiella burnetii (strain RSA 493 / Nine Mile phase I).